Consider the following 197-residue polypeptide: Pyridoxal 5'-phosphate synthase subunit PdxT (197 aa).

Residue Gly-52 to Ser-54 coordinates L-glutamine. Catalysis depends on Cys-83, which acts as the Nucleophile. L-glutamine-binding positions include Arg-115 and Ile-142–Arg-143. Active-site charge relay system residues include His-178 and Glu-180.

The protein belongs to the glutaminase PdxT/SNO family. As to quaternary structure, in the presence of PdxS, forms a dodecamer of heterodimers. Only shows activity in the heterodimer.

The enzyme catalyses aldehydo-D-ribose 5-phosphate + D-glyceraldehyde 3-phosphate + L-glutamine = pyridoxal 5'-phosphate + L-glutamate + phosphate + 3 H2O + H(+). It carries out the reaction L-glutamine + H2O = L-glutamate + NH4(+). Its pathway is cofactor biosynthesis; pyridoxal 5'-phosphate biosynthesis. Functionally, catalyzes the hydrolysis of glutamine to glutamate and ammonia as part of the biosynthesis of pyridoxal 5'-phosphate. The resulting ammonia molecule is channeled to the active site of PdxS. This chain is Pyridoxal 5'-phosphate synthase subunit PdxT, found in Korarchaeum cryptofilum (strain OPF8).